The sequence spans 689 residues: Elongation factor G (689 aa).

The 275-residue stretch at 8–282 folds into the tr-type G domain; the sequence is ERTRNIGIMA…GVVAYMPSPL (275 aa). GTP-binding positions include 17 to 24, 81 to 85, and 135 to 138; these read AHIDAGKT, DTPGH, and NKMD.

Belongs to the TRAFAC class translation factor GTPase superfamily. Classic translation factor GTPase family. EF-G/EF-2 subfamily.

The protein resides in the cytoplasm. Catalyzes the GTP-dependent ribosomal translocation step during translation elongation. During this step, the ribosome changes from the pre-translocational (PRE) to the post-translocational (POST) state as the newly formed A-site-bound peptidyl-tRNA and P-site-bound deacylated tRNA move to the P and E sites, respectively. Catalyzes the coordinated movement of the two tRNA molecules, the mRNA and conformational changes in the ribosome. This Alkaliphilus metalliredigens (strain QYMF) protein is Elongation factor G.